We begin with the raw amino-acid sequence, 213 residues long: Outer-membrane lipoprotein carrier protein (213 aa).

Positions 1-23 (MKKLLKQSLLGFALVSMTGAAFA) are cleaved as a signal peptide.

Belongs to the LolA family. In terms of assembly, monomer.

Its subcellular location is the periplasm. Its function is as follows. Participates in the translocation of lipoproteins from the inner membrane to the outer membrane. Only forms a complex with a lipoprotein if the residue after the N-terminal Cys is not an aspartate (The Asp acts as a targeting signal to indicate that the lipoprotein should stay in the inner membrane). This Actinobacillus pleuropneumoniae serotype 3 (strain JL03) protein is Outer-membrane lipoprotein carrier protein.